Here is a 203-residue protein sequence, read N- to C-terminus: Histidine biosynthesis bifunctional protein HisIE (203 aa).

The segment at 1–108 is phosphoribosyl-AMP cyclohydrolase; it reads MELDFDKMNG…GEKNEEPVMF (108 aa). The tract at residues 109-203 is phosphoribosyl-ATP pyrophosphohydrolase; it reads LKALQDFIDK…ERHSSTWKKH (95 aa).

This sequence in the N-terminal section; belongs to the PRA-CH family. The protein in the C-terminal section; belongs to the PRA-PH family.

Its subcellular location is the cytoplasm. The enzyme catalyses 1-(5-phospho-beta-D-ribosyl)-ATP + H2O = 1-(5-phospho-beta-D-ribosyl)-5'-AMP + diphosphate + H(+). It carries out the reaction 1-(5-phospho-beta-D-ribosyl)-5'-AMP + H2O = 1-(5-phospho-beta-D-ribosyl)-5-[(5-phospho-beta-D-ribosylamino)methylideneamino]imidazole-4-carboxamide. The protein operates within amino-acid biosynthesis; L-histidine biosynthesis; L-histidine from 5-phospho-alpha-D-ribose 1-diphosphate: step 2/9. It participates in amino-acid biosynthesis; L-histidine biosynthesis; L-histidine from 5-phospho-alpha-D-ribose 1-diphosphate: step 3/9. This is Histidine biosynthesis bifunctional protein HisIE from Bacteroides thetaiotaomicron (strain ATCC 29148 / DSM 2079 / JCM 5827 / CCUG 10774 / NCTC 10582 / VPI-5482 / E50).